The following is a 453-amino-acid chain: Serine/threonine-protein kinase VRK3 (453 aa).

Residues 30-123 (EDGGTQSAVT…QSPQTLKRTR (94 aa)) are disordered. The span at 33–46 (GTQSAVTPHVSSVP) shows a compositional bias: polar residues. A Nuclear localization signal motif is present at residues 49 to 64 (RRDLNSSFETSPKKVK). 6 positions are modified to phosphoserine: S54, S55, S59, S82, S83, and S108. Polar residues predominate over residues 81–101 (DSSGSDNTLTSPDRATGTRSR). Residues 109–123 (PLSNRQSPQTLKRTR) show a composition bias toward polar residues. Residues 125–436 (TTSLQALATG…TLRNSLEALL (312 aa)) enclose the Protein kinase domain.

This sequence belongs to the protein kinase superfamily. CK1 Ser/Thr protein kinase family. VRK subfamily. As to quaternary structure, interacts with DUSP3. Interacts with RAN. Interacts with HSP70/HSPA1A. Phosphorylated at Ser-108 by CDK5; leading to protection of the cell against H2O2-induced apoptosis. Post-translationally, ubiquitinated by RNF144A. Expressed in liver, kidney, muscle, thymus, and bone marrow. Weakly expressed in spleen.

The protein localises to the nucleus. Its subcellular location is the cytoplasm. The catalysed reaction is L-seryl-[protein] + ATP = O-phospho-L-seryl-[protein] + ADP + H(+). Plays a role in the regulation of the cell cycle by phosphorylating the nuclear envelope protein barrier-to-autointegration factor/BAF that is required for disassembly and reassembly, respectively, of the nuclear envelope during mitosis. Under normal physiological conditions, negatively regulates ERK activity along with VHR phosphatase in the nucleus, causing timely and transient action of ERK. Stress conditions activate CDK5 which phosphorylates VRK3 to increase VHR phosphatase activity and suppress prolonged ERK activation that causes cell death. For example, upon glutamate induction, promotes nuclear localization of HSP70/HSPA1A to inhibit ERK activation via VHR phosphatase. This is Serine/threonine-protein kinase VRK3 (Vrk3) from Mus musculus (Mouse).